Here is a 186-residue protein sequence, read N- to C-terminus: Testis-expressed protein 36 (186 aa).

The tract at residues 1–52 (MTKGRRFNPPSDKDGRWFPHIGLTQKTPESITSATSKEPQSPHLPRQAEGKL) is disordered. The span at 24–39 (TQKTPESITSATSKEP) shows a compositional bias: polar residues.

This Homo sapiens (Human) protein is Testis-expressed protein 36 (TEX36).